A 352-amino-acid polypeptide reads, in one-letter code: Fc receptor-like A (352 aa).

Residues 1–30 (MKLSCTLTQWALYVCPAVLLATQMLLAASS) form the signal peptide. The interval 46 to 65 (CQAAAEEDEGDEDDGDMTQS) is disordered. The segment covering 50–61 (AEEDEGDEDDGD) has biased composition (acidic residues). Ig-like C2-type domains are found at residues 80–169 (PFHL…EAAS) and 182–260 (PVLK…RQIS). 2 cysteine pairs are disulfide-bonded: cysteine 109/cysteine 153 and cysteine 202/cysteine 250. Positions 275–310 (KPTASETPPTEALGPLPPPPASSAEQPRFSSPDPHL) are disordered.

Monomer or homodimer; disulfide-linked. Highly expressed in spleen. Expressed in immature B-cell and B-cell lines.

Its subcellular location is the cytoplasm. Functionally, may be implicated in B-cell differentiation and lymphomagenesis. This Mus musculus (Mouse) protein is Fc receptor-like A (Fcrla).